A 175-amino-acid polypeptide reads, in one-letter code: Pancreatic beta cell growth factor (175 aa).

The N-terminal stretch at 1–26 (MMLPMTLCRMSWMLLSCLMFLSWVEG) is a signal peptide. Residues 38–175 (ITCPQGSVAY…ELPYICKFKV (138 aa)) form the C-type lectin domain. Cystine bridges form between C40-C51, C68-C171, and C146-C163.

As to expression, expressed only in CW animals pancreas and to a lesser extent in duodenum. In pancreas it is found in acinar cells, but not in islets.

It localises to the secreted. In terms of biological role, constituent of ilotropin, which is a partially purified preparation of cellophane wrapping (CW) pancreata. Capable of initiating duct cell proliferation, a prerequisite for islet neogenesis. This is Pancreatic beta cell growth factor (INGAP) from Mesocricetus auratus (Golden hamster).